The following is a 153-amino-acid chain: Endoribonuclease YbeY (153 aa).

Positions 113, 117, and 123 each coordinate Zn(2+).

This sequence belongs to the endoribonuclease YbeY family. The cofactor is Zn(2+).

It localises to the cytoplasm. Single strand-specific metallo-endoribonuclease involved in late-stage 70S ribosome quality control and in maturation of the 3' terminus of the 16S rRNA. This Aliivibrio fischeri (strain ATCC 700601 / ES114) (Vibrio fischeri) protein is Endoribonuclease YbeY.